We begin with the raw amino-acid sequence, 381 residues long: Alkanesulfonate monooxygenase (381 aa).

It belongs to the SsuD family. As to quaternary structure, homotetramer.

It carries out the reaction an alkanesulfonate + FMNH2 + O2 = an aldehyde + FMN + sulfite + H2O + 2 H(+). In terms of biological role, catalyzes the desulfonation of aliphatic sulfonates. In Escherichia coli O6:K15:H31 (strain 536 / UPEC), this protein is Alkanesulfonate monooxygenase.